The chain runs to 351 residues: MTATIKLGELAEFLGATLRGSPEKEITGLATLQEAGPAQLSFLANPQYRKYLVDSQAAAVLLKAADAEGFAGDALVVADPYLAYARVSHLFDPKPKAAAGVHPSAVIADDAQVDPAASIGAFAVVESGARIAAGVTVGAHCFIGARCEIGADGWLAPRVTLYHDVRIGERVVIQSGAVIGGEGFGFANAKGIWNKIAQVGGVLIGDDVEIGVNTAVDRGALADTVIGNGVKLDNQIQIAHNVQIGDHTAMAACVGISGSTKIGKHCMLAGGVGLVGHIDICDNVFITGMTMVTHSITEPGAYSSGTAMQPAAEWRKSAARLRQLDDMARRLKQLEKRVGDVTPGGNASSEG.

The active-site Proton acceptor is His-240.

It belongs to the transferase hexapeptide repeat family. LpxD subfamily. Homotrimer.

It catalyses the reaction a UDP-3-O-[(3R)-3-hydroxyacyl]-alpha-D-glucosamine + a (3R)-hydroxyacyl-[ACP] = a UDP-2-N,3-O-bis[(3R)-3-hydroxyacyl]-alpha-D-glucosamine + holo-[ACP] + H(+). Its pathway is bacterial outer membrane biogenesis; LPS lipid A biosynthesis. In terms of biological role, catalyzes the N-acylation of UDP-3-O-acylglucosamine using 3-hydroxyacyl-ACP as the acyl donor. Is involved in the biosynthesis of lipid A, a phosphorylated glycolipid that anchors the lipopolysaccharide to the outer membrane of the cell. The protein is UDP-3-O-acylglucosamine N-acyltransferase of Pseudomonas fluorescens (strain SBW25).